Here is a 183-residue protein sequence, read N- to C-terminus: ATP-dependent protease subunit HslV (183 aa).

Residue T13 is part of the active site. Na(+) contacts are provided by G168, C171, and T174.

It belongs to the peptidase T1B family. HslV subfamily. A double ring-shaped homohexamer of HslV is capped on each side by a ring-shaped HslU homohexamer. The assembly of the HslU/HslV complex is dependent on binding of ATP.

The protein localises to the cytoplasm. It carries out the reaction ATP-dependent cleavage of peptide bonds with broad specificity.. Its activity is regulated as follows. Allosterically activated by HslU binding. Functionally, protease subunit of a proteasome-like degradation complex believed to be a general protein degrading machinery. This Xylella fastidiosa (strain M23) protein is ATP-dependent protease subunit HslV.